Consider the following 389-residue polypeptide: MIQSILDNDLYKFTMQQAVHMLYPRVDVEYEFINRSNTPFPKDFAQRLQVEVQGMKNFRLTPEEKEYLDKTCYFMTPVYLDFLEHYTFDPDEVTVSQTNSELSVTIKGPWYRTILWEVPLMAIISELYFVMTNARPLPDEQIRVINLNKAKILSCNNIRYADFGTRRRFSSSGHEALIRDILALEHNTLIGTSNVNLARLFNIKPIGTMAHEWIMFHGVLNGYRMANPTAVAAWATAFHGHLGIALTDTFTTDIFLSTFDTLHAKLFDGVRHDSGDPIAFIDRIVDHYKKLHIDPITKTIVFSDGLDIDKAVHIHNHCINRIRDSYGIGTNLTNDVGVTPLNMVIKLAKCRTAPEKDWHNAIKLSDDKGKHTGDSEELAHCIKVLERGM.

Phosphohistidine; by autocatalysis is present on H211.

It belongs to the NAPRTase family. Post-translationally, transiently phosphorylated on a His residue during the reaction cycle. Phosphorylation strongly increases the affinity for substrates and increases the rate of nicotinate D-ribonucleotide production. Dephosphorylation regenerates the low-affinity form of the enzyme, leading to product release.

It carries out the reaction nicotinate + 5-phospho-alpha-D-ribose 1-diphosphate + ATP + H2O = nicotinate beta-D-ribonucleotide + ADP + phosphate + diphosphate. Its pathway is cofactor biosynthesis; NAD(+) biosynthesis; nicotinate D-ribonucleotide from nicotinate: step 1/1. In terms of biological role, catalyzes the synthesis of beta-nicotinate D-ribonucleotide from nicotinate and 5-phospho-D-ribose 1-phosphate at the expense of ATP. This chain is Nicotinate phosphoribosyltransferase, found in Desulforapulum autotrophicum (strain ATCC 43914 / DSM 3382 / VKM B-1955 / HRM2) (Desulfobacterium autotrophicum).